The sequence spans 236 residues: Small ribosomal subunit protein uS2c (236 aa).

The protein belongs to the universal ribosomal protein uS2 family.

It is found in the plastid. The protein resides in the chloroplast. The protein is Small ribosomal subunit protein uS2c (rps2) of Agrostis stolonifera (Creeping bentgrass).